The primary structure comprises 602 residues: Protein DGS1, mitochondrial (602 aa).

2 helical membrane-spanning segments follow: residues 300 to 320 (LYWV…IWLL) and 465 to 485 (INFA…MLTV).

As to quaternary structure, component of a mitochondrial large protein complex that contains, at least, MIC60, DGS1, TOM40 (e.g. TOM40-1), TOM20 proteins (e.g. TOM20-2), and petC/RISP.

The protein resides in the mitochondrion outer membrane. Functionally, involved in galactoglycerolipid biosynthesis. Contributes to an intracellular signal that regulates an alternative DGD1-independent galactoglycerolipid biosynthesis pathway in chloroplasts. Being involved in mitochondrial lipid homeostasis, modulates mitochondrion biogenesis and physiology, as well as stress responses. This is Protein DGS1, mitochondrial from Arabidopsis thaliana (Mouse-ear cress).